Reading from the N-terminus, the 230-residue chain is NAD(P)H-hydrate epimerase (230 aa).

Residues 11-218 enclose the YjeF N-terminal domain; sequence AIDVDQELFT…ALQRKYGLNL (208 aa). 61–65 serves as a coordination point for (6S)-NADPHX; that stretch reads NNGGD. 2 residues coordinate K(+): Asn-62 and Asp-126. Residues 130–136 and Asp-159 contribute to the (6S)-NADPHX site; that span reads GFSFKPP. Residue Ser-162 coordinates K(+).

Belongs to the NnrE/AIBP family. K(+) serves as cofactor.

It catalyses the reaction (6R)-NADHX = (6S)-NADHX. The enzyme catalyses (6R)-NADPHX = (6S)-NADPHX. Functionally, catalyzes the epimerization of the S- and R-forms of NAD(P)HX, a damaged form of NAD(P)H that is a result of enzymatic or heat-dependent hydration. This is a prerequisite for the S-specific NAD(P)H-hydrate dehydratase to allow the repair of both epimers of NAD(P)HX. This chain is NAD(P)H-hydrate epimerase, found in Drosophila yakuba (Fruit fly).